Here is a 494-residue protein sequence, read N- to C-terminus: Prenylcysteine oxidase 1-like (494 aa).

Residues 1–22 (MARAAPLLAALTALLAAAAAGG) form the signal peptide. Residue N342 is glycosylated (N-linked (GlcNAc...) asparagine).

The protein belongs to the prenylcysteine oxidase family. It depends on FAD as a cofactor.

It is found in the secreted. Functionally, likely to have oxidoreductase activity. Required in the mevalonate pathway to regulate prenylation and enhances the bactericidal activity of neutrophils. In Homo sapiens (Human), this protein is Prenylcysteine oxidase 1-like (PCYOX1L).